The chain runs to 497 residues: UDP-N-acetylmuramoyl-L-alanyl-D-glutamate--2,6-diaminopimelate ligase (497 aa).

Position 33 (Ser33) interacts with UDP-N-acetyl-alpha-D-muramoyl-L-alanyl-D-glutamate. 119 to 125 (GTNGKTT) contributes to the ATP binding site. Residues 161 to 162 (TT), Ser188, Gln194, and Arg196 contribute to the UDP-N-acetyl-alpha-D-muramoyl-L-alanyl-D-glutamate site. An N6-carboxylysine modification is found at Lys228. Residues Arg390, 414–417 (DNPR), Gly465, and Glu469 each bind meso-2,6-diaminopimelate. The Meso-diaminopimelate recognition motif signature appears at 414-417 (DNPR).

Belongs to the MurCDEF family. MurE subfamily. Mg(2+) is required as a cofactor. Post-translationally, carboxylation is probably crucial for Mg(2+) binding and, consequently, for the gamma-phosphate positioning of ATP.

It localises to the cytoplasm. The catalysed reaction is UDP-N-acetyl-alpha-D-muramoyl-L-alanyl-D-glutamate + meso-2,6-diaminopimelate + ATP = UDP-N-acetyl-alpha-D-muramoyl-L-alanyl-gamma-D-glutamyl-meso-2,6-diaminopimelate + ADP + phosphate + H(+). It functions in the pathway cell wall biogenesis; peptidoglycan biosynthesis. Catalyzes the addition of meso-diaminopimelic acid to the nucleotide precursor UDP-N-acetylmuramoyl-L-alanyl-D-glutamate (UMAG) in the biosynthesis of bacterial cell-wall peptidoglycan. This chain is UDP-N-acetylmuramoyl-L-alanyl-D-glutamate--2,6-diaminopimelate ligase, found in Synechococcus elongatus (strain ATCC 33912 / PCC 7942 / FACHB-805) (Anacystis nidulans R2).